Consider the following 339-residue polypeptide: MAGRVKIKQKELIDSTVKNKNVMNLFHEIIGSKGNINFSIVWPKFKKIKQSVYEYISILSVLEKASVMQNFEEDKKMLELFVQKLWAAYEGYFKYPEIEKYEVDGQVNFNLVPQYVLEKFSQLYRSRINSELVTLILNSCAFLSKYNDYILKKDPYILTITPGLCFSPIPNFEDLNFKYLYNSDKNSQHDKDFIMFILYKLYTAALGVYNAISIPDIDVEDLENIILSSVSQIKKQIPRCKDAFNKIESSVHLLRKNFNTYYSDYVGSGYNPTIIMEQYIKDISQDSKNISPRISYQFRTIIKYYRDMIATKHQTMDPQVLNLVKHVEKKLDMLDREKK.

The protein belongs to the asfivirus H339R family. As to quaternary structure, interacts with host NACA (alpha chain of nascent polypeptide-associated complex).

Its subcellular location is the host cytoplasm. The protein resides in the host nucleus. In African swine fever virus (isolate Tick/Malawi/Lil 20-1/1983) (ASFV), this protein is Protein H339R.